Consider the following 693-residue polypeptide: Testis-specific Y-encoded-like protein 2 (693 aa).

Disordered stretches follow at residues 1-56 (MDRP…EAAQ) and 104-125 (GYGE…EASG). Residue Lys-11 forms a Glycyl lysine isopeptide (Lys-Gly) (interchain with G-Cter in SUMO2) linkage. Phosphoserine occurs at positions 18 and 20. Pro residues predominate over residues 23–44 (RDPPPPPPPPPLLRLPLPPPQQ). Residues Lys-163 and Lys-165 each participate in a glycyl lysine isopeptide (Lys-Gly) (interchain with G-Cter in SUMO2) cross-link. The segment at 175–207 (EDEDERESMRSSRRRRRRRRRKQRKVKRESRER) is disordered. Basic residues predominate over residues 185-202 (SSRRRRRRRRRKQRKVKR). Thr-340 is modified (phosphothreonine). Disordered stretches follow at residues 474 to 605 (ENIC…DIEY) and 627 to 693 (ISDE…GKTG). A compositionally biased stretch (polar residues) spans 487-496 (VPNNETTDNN). Residues 509 to 519 (ESADDNNENPE) are compositionally biased toward acidic residues. The span at 531–542 (NPNNNENTYGNN) shows a compositional bias: low complexity. 2 stretches are compositionally biased toward acidic residues: residues 559–602 (SDSD…DDRD) and 627–675 (ISDE…DLED). Phosphoserine is present on residues Ser-658, Ser-668, and Ser-671.

This sequence belongs to the nucleosome assembly protein (NAP) family. As to quaternary structure, interacts with histones. Interacts with CASK. Part of a complex containing CASK, TBR1 and TSPYL2. In terms of processing, phosphorylation at Ser-20 and/or Thr-340 impairs function on cell proliferation. As to expression, ubiquitously expressed, with highest levels in brain, testis and heart, and lowest levels in liver and pancreas.

It localises to the nucleus. The protein resides in the cytoplasm. In terms of biological role, part of the CASK/TBR1/TSPYL2 transcriptional complex which modulates gene expression in response to neuronal synaptic activity, probably by facilitating nucleosome assembly. May inhibit cell proliferation by inducing p53-dependent CDKN1A expression. The sequence is that of Testis-specific Y-encoded-like protein 2 (TSPYL2) from Homo sapiens (Human).